A 527-amino-acid chain; its full sequence is Probable protein kinase UbiB (527 aa).

The Protein kinase domain occupies 118-501 (DFERVPVASA…QKRTNRLLQG (384 aa)). ATP is bound by residues 124 to 132 (VASASIAQV) and Lys-150. Residue Asp-285 is the Proton acceptor of the active site. The chain crosses the membrane as a helical span at residues 502–522 (LLMFGVAVGVGAVLARAWLAI).

Belongs to the ABC1 family. UbiB subfamily.

The protein localises to the cell inner membrane. The protein operates within cofactor biosynthesis; ubiquinone biosynthesis [regulation]. Functionally, is probably a protein kinase regulator of UbiI activity which is involved in aerobic coenzyme Q (ubiquinone) biosynthesis. This chain is Probable protein kinase UbiB, found in Paraburkholderia phymatum (strain DSM 17167 / CIP 108236 / LMG 21445 / STM815) (Burkholderia phymatum).